The sequence spans 269 residues: Protein tsct-1 (269 aa).

The protein belongs to the TSC-22/Dip/Bun family.

This Caenorhabditis elegans protein is Protein tsct-1.